The following is a 132-amino-acid chain: ATP synthase epsilon chain (132 aa).

Belongs to the ATPase epsilon chain family. In terms of assembly, F-type ATPases have 2 components, CF(1) - the catalytic core - and CF(0) - the membrane proton channel. CF(1) has five subunits: alpha(3), beta(3), gamma(1), delta(1), epsilon(1). CF(0) has three main subunits: a, b and c.

The protein resides in the cell inner membrane. Produces ATP from ADP in the presence of a proton gradient across the membrane. This is ATP synthase epsilon chain from Gloeobacter violaceus (strain ATCC 29082 / PCC 7421).